The following is a 336-amino-acid chain: tRNA N6-adenosine threonylcarbamoyltransferase (336 aa).

Fe cation contacts are provided by His-112 and His-116. Substrate contacts are provided by residues 136 to 140 (LVSGG), Asp-169, Gly-182, and Asn-276. Asp-304 contacts Fe cation.

It belongs to the KAE1 / TsaD family. Fe(2+) serves as cofactor.

Its subcellular location is the cytoplasm. The catalysed reaction is L-threonylcarbamoyladenylate + adenosine(37) in tRNA = N(6)-L-threonylcarbamoyladenosine(37) in tRNA + AMP + H(+). Functionally, required for the formation of a threonylcarbamoyl group on adenosine at position 37 (t(6)A37) in tRNAs that read codons beginning with adenine. Is involved in the transfer of the threonylcarbamoyl moiety of threonylcarbamoyl-AMP (TC-AMP) to the N6 group of A37, together with TsaE and TsaB. TsaD likely plays a direct catalytic role in this reaction. This is tRNA N6-adenosine threonylcarbamoyltransferase from Francisella philomiragia subsp. philomiragia (strain ATCC 25017 / CCUG 19701 / FSC 153 / O#319-036).